A 247-amino-acid polypeptide reads, in one-letter code: Eukaryotic translation initiation factor 3 subunit J (247 aa).

Disordered stretches follow at residues 1 to 64 (MADW…KTLK) and 77 to 101 (EEKRKAEEKQKLEEEDKELTPEEQM). Over residues 24–45 (EGEDEDDDIKESWDDDDEDEKK) the composition is skewed to acidic residues. Residues 43–108 (EKKEDEAKNT…EQMAEKLRRQ (66 aa)) are a coiled coil.

It belongs to the eIF-3 subunit J family. In terms of assembly, component of the eukaryotic translation initiation factor 3 (eIF-3) complex.

It localises to the cytoplasm. Functionally, component of the eukaryotic translation initiation factor 3 (eIF-3) complex, which is involved in protein synthesis of a specialized repertoire of mRNAs and, together with other initiation factors, stimulates binding of mRNA and methionyl-tRNAi to the 40S ribosome. The eIF-3 complex specifically targets and initiates translation of a subset of mRNAs involved in cell proliferation. The chain is Eukaryotic translation initiation factor 3 subunit J from Nematostella vectensis (Starlet sea anemone).